The primary structure comprises 113 residues: Hydrogenase maturation factor HypA (113 aa).

H2 contributes to the Ni(2+) binding site. Zn(2+) contacts are provided by C73, C76, C89, and C92.

Belongs to the HypA/HybF family.

In terms of biological role, involved in the maturation of [NiFe] hydrogenases. Required for nickel insertion into the metal center of the hydrogenase. The protein is Hydrogenase maturation factor HypA of Dechloromonas aromatica (strain RCB).